Here is a 337-residue protein sequence, read N- to C-terminus: 5-formaminoimidazole-4-carboxamide-1-(beta)-D-ribofuranosyl 5'-monophosphate synthetase (337 aa).

Positions 9 and 73 each coordinate 5-amino-1-(5-phospho-beta-D-ribosyl)imidazole-4-carboxamide. The 231-residue stretch at 94-324 (KKIFEWEADQ…IGRRIAREIR (231 aa)) folds into the ATP-grasp domain. Residues 124-184 (PEDV…VPMY) and glutamate 206 contribute to the ATP site. Residue asparagine 234 coordinates 5-amino-1-(5-phospho-beta-D-ribosyl)imidazole-4-carboxamide. Positions 273 and 286 each coordinate Mg(2+).

This sequence belongs to the phosphohexose mutase family. Requires Mg(2+) as cofactor. Mn(2+) is required as a cofactor.

It catalyses the reaction 5-amino-1-(5-phospho-beta-D-ribosyl)imidazole-4-carboxamide + formate + ATP = 5-formamido-1-(5-phospho-D-ribosyl)imidazole-4-carboxamide + ADP + phosphate. Its pathway is purine metabolism; IMP biosynthesis via de novo pathway; 5-formamido-1-(5-phospho-D-ribosyl)imidazole-4-carboxamide from 5-amino-1-(5-phospho-D-ribosyl)imidazole-4-carboxamide (formate route): step 1/1. In terms of biological role, catalyzes the ATP- and formate-dependent formylation of 5-aminoimidazole-4-carboxamide-1-beta-d-ribofuranosyl 5'-monophosphate (AICAR) to 5-formaminoimidazole-4-carboxamide-1-beta-d-ribofuranosyl 5'-monophosphate (FAICAR) in the absence of folates. This Saccharolobus solfataricus (strain ATCC 35092 / DSM 1617 / JCM 11322 / P2) (Sulfolobus solfataricus) protein is 5-formaminoimidazole-4-carboxamide-1-(beta)-D-ribofuranosyl 5'-monophosphate synthetase.